The following is a 152-amino-acid chain: Alpha-amylase inhibitor BDAI-1 (152 aa).

The N-terminal stretch at 1 to 30 (MGAMWMKSMLLVLLLCMLMVTPMTGARSDN) is a signal peptide.

Belongs to the protease inhibitor I6 (cereal trypsin/alpha-amylase inhibitor) family. As to quaternary structure, homodimer. Five disulfide bonds, which are essential for the inhibitor activity, are probably present. As to expression, endosperm.

It localises to the secreted. Functionally, could be involved in insect defense mechanisms. Inhibits insect-type alpha-amylase. The polypeptide is Alpha-amylase inhibitor BDAI-1 (IAD1) (Hordeum vulgare (Barley)).